A 71-amino-acid chain; its full sequence is UPF0346 protein Bcer98_1690 (71 aa).

Belongs to the UPF0346 family.

The polypeptide is UPF0346 protein Bcer98_1690 (Bacillus cytotoxicus (strain DSM 22905 / CIP 110041 / 391-98 / NVH 391-98)).